We begin with the raw amino-acid sequence, 285 residues long: Nucleotide-binding protein Pnap_0906 (285 aa).

Position 8 to 15 (G8 to S15) interacts with ATP. GTP is bound at residue D57 to S60.

It belongs to the RapZ-like family.

In terms of biological role, displays ATPase and GTPase activities. The chain is Nucleotide-binding protein Pnap_0906 from Polaromonas naphthalenivorans (strain CJ2).